The sequence spans 284 residues: Nucleotide-binding protein Sputw3181_3461 (284 aa).

8–15 (GRSGSGKS) serves as a coordination point for ATP. Residue 56-59 (DVRN) coordinates GTP.

It belongs to the RapZ-like family.

In terms of biological role, displays ATPase and GTPase activities. The sequence is that of Nucleotide-binding protein Sputw3181_3461 from Shewanella sp. (strain W3-18-1).